A 3253-amino-acid chain; its full sequence is tRNA nuclease CdiA (3253 aa).

The signal sequence occupies residues 1–32; that stretch reads MHQPPVRFPYRLLSYLISTIIAGQPLLPAVGA. Positions 36–322 are two-partner system transport domain (TPS); it reads PQNGAGMDKA…AGGNLSVTGT (287 aa). The interval 351-1384 is FHA-1; the sequence is GELTAGQNAM…ITIRTGHLLN (1034 aa). The segment at 1385–1656 is receptor binding domain (RBD); that stretch reads QREGINETKS…DLASGIVEGN (272 aa). The segment at 1657–1841 is YP domain; sequence YPLPSGNNGY…LSPKDVTLQN (185 aa). Residues 1842-1902 form a periplasmic FHA-1 repeat (pFR) region; that stretch reads GSIISGQNVH…GLKAMGDINN (61 aa). The tract at residues 1944-2548 is FHA-2; it reads TYTGSIASVS…TSKYDSKQTS (605 aa). Disordered regions lie at residues 2228 to 2252, 2362 to 2410, 2483 to 2503, and 2687 to 2712; these read GSSKTTHDRREAGTTQSQSASTIGS, TGDP…GKNR, GSEKGNGTEWTETTTDSGKTV, and IRDRDNQKQNPADLSRDPAHANDSIS. Composition is skewed to polar residues over residues 2240 to 2252, 2368 to 2403, and 2490 to 2503; these read GTTQSQSASTIGS, TGVSLSLTTQKSKSQQHSESDTVSGSTLNAGNNLSV, and TEWTETTTDSGKTV. The pretoxin (PT) domain stretch occupies residues 2888–2930; sequence SDLSEEQKQTISTLATVSAGLAGGLTGNSSASAAVGAQSGKNA. The short motif at 2931–2934 is the VDNN CT cleavage motif element; the sequence is VDNN. Positions 2931–3253 are C-terminal effector domain (CT); it reads VDNNYLSVSE…TGIVSNFHPK (323 aa).

This sequence in the N-terminal section; belongs to the CdiA toxin family. It in the C-terminal section; belongs to the bacterial EndoU family. In terms of assembly, forms a 1:1 complex with cognate immunity protein CdiI-STECO31. TRNase activity is metal-independent. serves as cofactor. Post-translationally, the CT domain is cleaved upon binding to receptor Tsx on target cells.

The protein resides in the secreted. It localises to the target cell. It is found in the target cell cytoplasm. Its function is as follows. Toxic component of a toxin-immunity protein module, which functions as a cellular contact-dependent growth inhibition (CDI) system. CDI modules allow bacteria to communicate with and inhibit the growth of closely related neighboring target bacteria in a contact-dependent fashion (target cell counts decrease 1000- to 10000-fold with this CDI). Uses outer membrane nucleoside transporter Tsx on target cells as a receptor. Gains access to the cytoplasm of target cells by using integral inner membrane protein PTS system glucose-specific EIICB component (ptsG). Targeting of the C-terminal domain (CT) domain (residues 2931-3253) in the absence of immunity protein inhibits cell growth and causes tRNA(UUC-Glu) cleavage; expression of cognate immunity protein CdiI-STECO31 neutralizes growth inhibition leaving tRNA(UUC-Glu) is intact, whereas non-cognate immunity proteins do not confer protection. The CT domain cleaves tRNA; it is most active against tRNA(UUC-Glu), but also has modest activity against tRNA(GUC-Asp), tRNA(UUG-Gln), tRNA(CCC-Gly), tRNA(UCC-Gly), tRNA(GCC-Gly), tRNA(UUU-Lys), tRNA(GGU-Thr) and tRNA(CCA-Trp); tRNA cleavage is inhibited by cognate immunity protein CdiI. Cleavage of tRNA(UUC-Glu) occurs in the anticodon loop between cytosine(37) and 2-methyladenosine(38) (C37-m2A38) and probably also occurs in the anticodon loop of other tRNAs as well. The CdiA protein is thought to be exported from the cell through the central lumen of CdiB, the other half of its two-partner system (TPS). The TPS domain probably remains associated with CdiB while the FHA-1 domain forms an extended filament (33 nm long) with the receptor-binding domain (RBD) at its extremity; in the secretion arrested state the C-terminus of the RBD and YP domains form a hairpin-like structure as the FHA-2, PT and CT domains are periplasmic. The YP domain is probably responsible for this arrest at the point where it re-enters the host cell periplasm. Upon binding to a target cell outer membrane receptor (Tsx for this CDI) a signal is transmitted to activate secretion. The filament becomes about 5 nm longer, the rest of CdiA is secreted and the FHA-2 domain becomes stably associated with the target cell's outer membrane where it facilitates entry of the toxic CT domain into the target cell periplasm. From there the toxic CT domain is cleaved and gains access to the target cell cytoplasm via an inner membrane protein (PTS system glucose-specific EIICB component, ptsG for this CDI). The sequence is that of tRNA nuclease CdiA from Escherichia coli (strain STEC_O31).